Reading from the N-terminus, the 536-residue chain is 2-isopropylmalate synthase (536 aa).

In terms of domain architecture, Pyruvate carboxyltransferase spans 8–273 (VLIFDTTLRD…FFGKDSESPT (266 aa)). 4 residues coordinate Mn(2+): Asp17, His208, His210, and Asn244. The regulatory domain stretch occupies residues 408–536 (KLHLVQVSCG…PQHDVVKANL (129 aa)).

The protein belongs to the alpha-IPM synthase/homocitrate synthase family. LeuA type 1 subfamily. In terms of assembly, homodimer. Requires Mn(2+) as cofactor.

The protein localises to the cytoplasm. It catalyses the reaction 3-methyl-2-oxobutanoate + acetyl-CoA + H2O = (2S)-2-isopropylmalate + CoA + H(+). The protein operates within amino-acid biosynthesis; L-leucine biosynthesis; L-leucine from 3-methyl-2-oxobutanoate: step 1/4. In terms of biological role, catalyzes the condensation of the acetyl group of acetyl-CoA with 3-methyl-2-oxobutanoate (2-ketoisovalerate) to form 3-carboxy-3-hydroxy-4-methylpentanoate (2-isopropylmalate). This Prochlorococcus marinus (strain SARG / CCMP1375 / SS120) protein is 2-isopropylmalate synthase.